Reading from the N-terminus, the 316-residue chain is DNA-directed RNA polymerase subunit alpha (316 aa).

Residues 1–229 (MLEMEKPRID…EYLKLFTEID (229 aa)) are alpha N-terminal domain (alpha-NTD). The segment at 246–316 (KDKILEMSIE…LNLSFRKSED (71 aa)) is alpha C-terminal domain (alpha-CTD).

Belongs to the RNA polymerase alpha chain family. In terms of assembly, homodimer. The RNAP catalytic core consists of 2 alpha, 1 beta, 1 beta' and 1 omega subunit. When a sigma factor is associated with the core the holoenzyme is formed, which can initiate transcription.

The catalysed reaction is RNA(n) + a ribonucleoside 5'-triphosphate = RNA(n+1) + diphosphate. In terms of biological role, DNA-dependent RNA polymerase catalyzes the transcription of DNA into RNA using the four ribonucleoside triphosphates as substrates. The polypeptide is DNA-directed RNA polymerase subunit alpha (Syntrophomonas wolfei subsp. wolfei (strain DSM 2245B / Goettingen)).